Here is a 386-residue protein sequence, read N- to C-terminus: 8-amino-7-oxononanoate synthase (386 aa).

R23 provides a ligand contact to substrate. Residue 110–111 (GY) participates in pyridoxal 5'-phosphate binding. H135 lines the substrate pocket. Pyridoxal 5'-phosphate is bound by residues S181, H209, and T236. The residue at position 239 (K239) is an N6-(pyridoxal phosphate)lysine. T354 is a binding site for substrate.

Belongs to the class-II pyridoxal-phosphate-dependent aminotransferase family. BioF subfamily. As to quaternary structure, homodimer. The cofactor is pyridoxal 5'-phosphate.

It carries out the reaction 6-carboxyhexanoyl-[ACP] + L-alanine + H(+) = (8S)-8-amino-7-oxononanoate + holo-[ACP] + CO2. It participates in cofactor biosynthesis; biotin biosynthesis. Catalyzes the decarboxylative condensation of pimeloyl-[acyl-carrier protein] and L-alanine to produce 8-amino-7-oxononanoate (AON), [acyl-carrier protein], and carbon dioxide. In Thiobacillus denitrificans (strain ATCC 25259 / T1), this protein is 8-amino-7-oxononanoate synthase.